The chain runs to 261 residues: 1-(5-phosphoribosyl)-5-[(5-phosphoribosylamino)methylideneamino] imidazole-4-carboxamide isomerase (261 aa).

The protein belongs to the HisA/HisF family.

It localises to the cytoplasm. It catalyses the reaction 1-(5-phospho-beta-D-ribosyl)-5-[(5-phospho-beta-D-ribosylamino)methylideneamino]imidazole-4-carboxamide = 5-[(5-phospho-1-deoxy-D-ribulos-1-ylimino)methylamino]-1-(5-phospho-beta-D-ribosyl)imidazole-4-carboxamide. The protein operates within amino-acid biosynthesis; L-histidine biosynthesis; L-histidine from 5-phospho-alpha-D-ribose 1-diphosphate: step 4/9. Its function is as follows. Catalyzes the isomerization of the aminoaldose moiety of ProFAR to the aminoketose of PRFAR. The sequence is that of 1-(5-phosphoribosyl)-5-[(5-phosphoribosylamino)methylideneamino] imidazole-4-carboxamide isomerase from Saccharomyces cerevisiae (strain ATCC 204508 / S288c) (Baker's yeast).